Here is a 467-residue protein sequence, read N- to C-terminus: Ribulose bisphosphate carboxylase large chain (467 aa).

Residues 1-2 constitute a propeptide that is removed on maturation; it reads MS. At Pro-3 the chain carries N-acetylproline. Position 14 is an N6,N6,N6-trimethyllysine (Lys-14). Residues Asn-123 and Thr-173 each contribute to the substrate site. The Proton acceptor role is filled by Lys-175. Lys-177 is a substrate binding site. Mg(2+) contacts are provided by Lys-201, Asp-203, and Glu-204. At Lys-201 the chain carries N6-carboxylysine. His-294 acts as the Proton acceptor in catalysis. Substrate contacts are provided by Arg-295, His-327, and Ser-379.

It belongs to the RuBisCO large chain family. Type I subfamily. In terms of assembly, heterohexadecamer of 8 large chains and 8 small chains; disulfide-linked. The disulfide link is formed within the large subunit homodimers. Requires Mg(2+) as cofactor. The disulfide bond which can form in the large chain dimeric partners within the hexadecamer appears to be associated with oxidative stress and protein turnover.

The protein resides in the plastid. It localises to the chloroplast. It catalyses the reaction 2 (2R)-3-phosphoglycerate + 2 H(+) = D-ribulose 1,5-bisphosphate + CO2 + H2O. It carries out the reaction D-ribulose 1,5-bisphosphate + O2 = 2-phosphoglycolate + (2R)-3-phosphoglycerate + 2 H(+). Its function is as follows. RuBisCO catalyzes two reactions: the carboxylation of D-ribulose 1,5-bisphosphate, the primary event in carbon dioxide fixation, as well as the oxidative fragmentation of the pentose substrate in the photorespiration process. Both reactions occur simultaneously and in competition at the same active site. The chain is Ribulose bisphosphate carboxylase large chain from Phoenix reclinata (Senegal date palm).